The primary structure comprises 519 residues: Zinc finger and BTB domain-containing protein 18.3 (519 aa).

Positions 24–91 constitute a BTB domain; that stretch reads CDCTVLVGDA…MYEGKLQFKD (68 aa). The interval 189-227 is disordered; that stretch reads ASIPQTGGEVDTHTTAAGKTADSPCSSTGSLSHRSATSM. Polar residues predominate over residues 201-227; sequence HTTAAGKTADSPCSSTGSLSHRSATSM. 4 C2H2-type zinc fingers span residues 367–389, 407–429, 435–457, and 463–486; these read FMCPLCNKVFPSPHILQIHLSTH, PTCSLCGKTFSCMYTLKRHERTH, FTCTQCGKSFQYSHNLSRHAVVH, and HACKWCERRFTQSGDLYRHIRKFH.

The protein belongs to the krueppel C2H2-type zinc-finger protein family. ZBTB18 subfamily.

It is found in the nucleus. Transcriptional repressor that plays a role in various developmental processes. Specifically binds the consensus DNA sequence 5'-[AC]ACATCTG[GT][AC]-3' which contains the E box core, and acts by recruiting chromatin remodeling multiprotein complexes. This chain is Zinc finger and BTB domain-containing protein 18.3 (zbtb18.3), found in Xenopus laevis (African clawed frog).